Here is a 432-residue protein sequence, read N- to C-terminus: Adenosylhomocysteinase (432 aa).

The disordered stretch occupies residues 1–24 (MSAYSPLSAQLDADTDVDVESTRT). Aspartate 137 and glutamate 162 together coordinate substrate. Residue 163-165 (TTT) coordinates NAD(+). Substrate-binding residues include lysine 192 and aspartate 196. Residues asparagine 197, 226–231 (GYGYCG), glutamate 249, asparagine 284, 305–307 (AGH), and asparagine 352 each bind NAD(+).

The protein belongs to the adenosylhomocysteinase family. The cofactor is NAD(+).

Its subcellular location is the cytoplasm. The catalysed reaction is S-adenosyl-L-homocysteine + H2O = L-homocysteine + adenosine. It participates in amino-acid biosynthesis; L-homocysteine biosynthesis; L-homocysteine from S-adenosyl-L-homocysteine: step 1/1. In terms of biological role, may play a key role in the regulation of the intracellular concentration of adenosylhomocysteine. This chain is Adenosylhomocysteinase, found in Haloquadratum walsbyi (strain DSM 16854 / JCM 12705 / C23).